The primary structure comprises 207 residues: Ras-related protein Rab7 (207 aa).

GTP is bound by residues 15–22, 63–67, and 125–128; these read GDSGVGKT, DTAGQ, and NKID. 2 S-geranylgeranyl cysteine lipidation sites follow: cysteine 205 and cysteine 207. At cysteine 207 the chain carries Cysteine methyl ester.

This sequence belongs to the small GTPase superfamily. Rab family.

Its subcellular location is the cell membrane. Functionally, protein transport. Probably involved in vesicular traffic. The polypeptide is Ras-related protein Rab7 (Prunus armeniaca (Apricot)).